We begin with the raw amino-acid sequence, 815 residues long: Patatin-like phospholipase domain-containing protein LELG_00944 (815 aa).

A compositionally biased stretch (polar residues) spans 41–50 (VSTTAPTTPL). 2 disordered regions span residues 41 to 105 (VSTT…PQLK) and 140 to 166 (SENL…STSP). Residues 54 to 73 (LDMGDLSLLGGELGNGSDDV) show a composition bias toward low complexity. The span at 74-94 (VVGDDDDDDDDDDDDDDDDDD) shows a compositional bias: acidic residues. Residues 148-160 (KRTKFAKSSKSSK) are compositionally biased toward basic residues. Residues 185–205 (WPILTFVVIWVTILGFLYLAV) form a helical membrane-spanning segment. The 193-residue stretch at 360-552 (LCLSGGACFA…RTDIPIDALN (193 aa)) folds into the PNPLA domain. Positions 391–395 (GTSGG) match the GXSXG motif. Residue Ser-393 is the Nucleophile of the active site. Asp-539 (proton acceptor) is an active-site residue. Positions 753–815 (GSTLRDDDAD…LTKERRHTVY (63 aa)) are disordered. The segment covering 759-799 (DDADADVDEDDNEDEDEEDEDENDYEEYDVEDLDDPYESDA) has biased composition (acidic residues).

Belongs to the PLPL family.

The protein resides in the membrane. Probable lipid hydrolase. This is Patatin-like phospholipase domain-containing protein LELG_00944 from Lodderomyces elongisporus (strain ATCC 11503 / CBS 2605 / JCM 1781 / NBRC 1676 / NRRL YB-4239) (Yeast).